Consider the following 386-residue polypeptide: Prostacyclin receptor (386 aa).

At 1 to 16 (MADSCRNLTYVRGSVG) the chain is on the extracellular side. 2 cysteine pairs are disulfide-bonded: cysteine 5–cysteine 165 and cysteine 92–cysteine 170. An N-linked (GlcNAc...) asparagine glycan is attached at asparagine 7. A helical transmembrane segment spans residues 17 to 38 (PATSTLMFVAGVVGNGLALGIL). At 39-51 (SARRPARPSAFAV) the chain is on the cytoplasmic side. A helical membrane pass occupies residues 52–76 (LVTGLAATDLLGTSFLSPAVFVAYA). Topologically, residues 77-94 (RNSSLLGLARGGPALCDA) are extracellular. A helical transmembrane segment spans residues 95-115 (FAFAMTFFGLASMLILFAMAV). Residues 116 to 134 (ERCLALSHPYLYAQLDGPR) are Cytoplasmic-facing. A helical transmembrane segment spans residues 135 to 158 (CARLALPAIYAFCVLFCALPLLGL). Residues 159 to 181 (GQHQQYCPGSWCFLRMRWAQPGG) are Extracellular-facing. Residues 182 to 208 (AAFSLAYAGLVALLVAAIFLCNGSVTL) form a helical membrane-spanning segment. The Cytoplasmic segment spans residues 209–235 (SLCRMYRQQKRHQGSLGPRPRTGEDEV). A helical transmembrane segment spans residues 236–260 (DHLILLALMTVVMAVCSLPLTIRCF). Residues 261–274 (TQAVAPDSSSEMGD) lie on the Extracellular side of the membrane. The chain crosses the membrane as a helical span at residues 275–295 (LLAFRFYAFNPILDPWVFILF). Residues 296–386 (RKAVFQRLKL…AEASVACSLC (91 aa)) are Cytoplasmic-facing. Residues 322–376 (PLSQLASGRRDPRAPSAPVGKEGSCVPLSAWGEGQVEPLPPTQQSSGSAVGTSSK) form a disordered region. A compositionally biased stretch (polar residues) spans 363–376 (TQQSSGSAVGTSSK). Cysteine 383 carries the post-translational modification Cysteine methyl ester. Cysteine 383 carries S-farnesyl cysteine lipidation. A propeptide spans 384–386 (SLC) (removed in mature form).

This sequence belongs to the G-protein coupled receptor 1 family. Interacts (non-isoprenylated C-terminus) with PDZK1. Post-translationally, isoprenylation does not influence ligand binding but is required for efficient coupling to the effectors adenylyl cyclase and phospholipase C.

It localises to the cell membrane. In terms of biological role, receptor for prostacyclin (prostaglandin I2 or PGI2). The activity of this receptor is mediated by G(s) proteins which activate adenylate cyclase. The protein is Prostacyclin receptor (PTGIR) of Homo sapiens (Human).